The following is a 438-amino-acid chain: Drainin (438 aa).

A coiled-coil region spans residues 54 to 104 (PKSQEEVLKHQREYEEIQRKAKKTLEREAKEKEKLDAIRKEKERSLIDARK). A Rab-GAP TBC domain is found at 133–374 (GLPPAVRGKI…RIWDLVFIEG (242 aa)).

The protein resides in the contractile vacuole membrane. It localises to the cytoplasm. May act as a GTPase-activating protein for Rab family protein(s). Required for osmotic regulation by the contractile vacuole in hypo-osmotic environments. Essential for periodic fusion of the contractile vacuole with the plasma membrane and consequent expulsion of water from the cell body. The chain is Drainin (phgA) from Dictyostelium discoideum (Social amoeba).